A 344-amino-acid chain; its full sequence is tRNA N6-adenosine threonylcarbamoyltransferase (344 aa).

2 residues coordinate Fe cation: His-110 and His-114. Residues 133–137 (VVSGA), Asp-166, Gly-179, and Asn-278 contribute to the substrate site. A Fe cation-binding site is contributed by Asp-303.

The protein belongs to the KAE1 / TsaD family. The cofactor is Fe(2+).

It localises to the cytoplasm. The catalysed reaction is L-threonylcarbamoyladenylate + adenosine(37) in tRNA = N(6)-L-threonylcarbamoyladenosine(37) in tRNA + AMP + H(+). Functionally, required for the formation of a threonylcarbamoyl group on adenosine at position 37 (t(6)A37) in tRNAs that read codons beginning with adenine. Is involved in the transfer of the threonylcarbamoyl moiety of threonylcarbamoyl-AMP (TC-AMP) to the N6 group of A37, together with TsaE and TsaB. TsaD likely plays a direct catalytic role in this reaction. The protein is tRNA N6-adenosine threonylcarbamoyltransferase of Chlamydia pneumoniae (Chlamydophila pneumoniae).